The chain runs to 415 residues: MRADLLIYNISKIYTPIGTKPLCGEDMEKIEEIENAYIAIKDGKILAAGKSPAAISAEREIDAKGMIALPGFVDPHTHVMHYGSRENEMALKLKGYSYIDILKQGGGIHSTVRATREASDEALLQKALKSLEIMLSHGVTTVEVKSGYGLNTEQEIRLLRLMNQLKSLSVVDIVPTFLGAHAIPQEFEENPWRYVEKVINEMLPKVKEEDLAEFCDVFCEEGAFDYEQSKKILEEAKKLGFRLKIHADELTHSKGGELAGILGAISADHLEEVSDEGIDLMKKAGTVAVLLPGVSFFLNRPYADARRLIERGLPVALGTDYNPGTSPTENLQLIMSFAYINMKMRAEEILTAVTLNAACAIDRGDEIGTIEEGKRADIVLVDAPNLDYMMYHFGINHVNTVIKAKGNDVVVIGIK.

Residues histidine 76 and histidine 78 each coordinate Fe(3+). Residues histidine 76 and histidine 78 each coordinate Zn(2+). 4-imidazolone-5-propanoate contacts are provided by arginine 85, tyrosine 148, and histidine 181. N-formimidoyl-L-glutamate is bound at residue tyrosine 148. Histidine 246 serves as a coordination point for Fe(3+). Histidine 246 serves as a coordination point for Zn(2+). Glutamate 249 provides a ligand contact to 4-imidazolone-5-propanoate. A Fe(3+)-binding site is contributed by aspartate 320. Aspartate 320 serves as a coordination point for Zn(2+). Residues asparagine 322 and glycine 324 each contribute to the N-formimidoyl-L-glutamate site. Threonine 325 contributes to the 4-imidazolone-5-propanoate binding site.

It belongs to the metallo-dependent hydrolases superfamily. HutI family. The cofactor is Zn(2+). Requires Fe(3+) as cofactor.

It localises to the cytoplasm. The catalysed reaction is 4-imidazolone-5-propanoate + H2O = N-formimidoyl-L-glutamate. The protein operates within amino-acid degradation; L-histidine degradation into L-glutamate; N-formimidoyl-L-glutamate from L-histidine: step 3/3. Its function is as follows. Catalyzes the hydrolytic cleavage of the carbon-nitrogen bond in imidazolone-5-propanoate to yield N-formimidoyl-L-glutamate. It is the third step in the universal histidine degradation pathway. This chain is Imidazolonepropionase, found in Caldanaerobacter subterraneus subsp. tengcongensis (strain DSM 15242 / JCM 11007 / NBRC 100824 / MB4) (Thermoanaerobacter tengcongensis).